We begin with the raw amino-acid sequence, 284 residues long: Bifunctional protein FolD (284 aa).

Residues 165–167 (GRS) and serine 190 contribute to the NADP(+) site.

This sequence belongs to the tetrahydrofolate dehydrogenase/cyclohydrolase family. Homodimer.

The catalysed reaction is (6R)-5,10-methylene-5,6,7,8-tetrahydrofolate + NADP(+) = (6R)-5,10-methenyltetrahydrofolate + NADPH. The enzyme catalyses (6R)-5,10-methenyltetrahydrofolate + H2O = (6R)-10-formyltetrahydrofolate + H(+). It participates in one-carbon metabolism; tetrahydrofolate interconversion. In terms of biological role, catalyzes the oxidation of 5,10-methylenetetrahydrofolate to 5,10-methenyltetrahydrofolate and then the hydrolysis of 5,10-methenyltetrahydrofolate to 10-formyltetrahydrofolate. The sequence is that of Bifunctional protein FolD from Streptococcus gordonii (strain Challis / ATCC 35105 / BCRC 15272 / CH1 / DL1 / V288).